Here is a 602-residue protein sequence, read N- to C-terminus: Sodium- and chloride-dependent GABA transporter 2 (602 aa).

The segment covering 1-13 (MDSRVSGTTSNGE) has biased composition (polar residues). The tract at residues 1 to 22 (MDSRVSGTTSNGETKPVYPVME) is disordered. Residues 1–40 (MDSRVSGTTSNGETKPVYPVMEKKEEDGTLERGHWNNKME) are Cytoplasmic-facing. Helical transmembrane passes span 41–61 (FVLS…FPYL), 68–88 (GAFF…VFLL), and 121–141 (IVIL…FYLF). At 142–206 (SSFTIDLPWG…GIQHLGALRW (65 aa)) the chain is on the extracellular side. Cys-153 and Cys-162 form a disulfide bridge. N-linked (GlcNAc...) asparagine glycosylation is present at Asn-173. Transmembrane regions (helical) follow at residues 207 to 227 (ELAL…WKGV) and 233 to 253 (VVYF…IRGV). Asn-269 is a glycosylation site (N-linked (GlcNAc...) asparagine). 7 helical membrane passes run 282-302 (AGTQ…ALGS), 319-339 (FLNS…LGFM), 366-386 (VVML…VVLL), 418-438 (VLIL…LTEG), 453-473 (GMCL…VYGA), 490-510 (PLIK…TFLF), and 528-548 (WWGD…IPAW). At 549-602 (SLYRLGTLKGPFRERIRQLMCPAEDLPQRNPAGPSAPATPRTSLLRLTELESHC) the chain is on the cytoplasmic side. Thr-587 is subject to Phosphothreonine. Position 591 is a phosphoserine (Ser-591).

This sequence belongs to the sodium:neurotransmitter symporter (SNF) (TC 2.A.22) family. SLC6A13 subfamily. Expressed in brain, kidney, lung, liver and testis.

Its subcellular location is the cell membrane. It localises to the basolateral cell membrane. The enzyme catalyses 4-aminobutanoate(out) + chloride(out) + 2 Na(+)(out) = 4-aminobutanoate(in) + chloride(in) + 2 Na(+)(in). It carries out the reaction taurine(out) + chloride(out) + 2 Na(+)(out) = taurine(in) + chloride(in) + 2 Na(+)(in). It catalyses the reaction beta-alanine(out) + chloride(out) + 2 Na(+)(out) = beta-alanine(in) + chloride(in) + 2 Na(+)(in). The catalysed reaction is hypotaurine(out) + chloride(out) + 2 Na(+)(out) = hypotaurine(in) + chloride(in) + 2 Na(+)(in). GABA transport is inhibited by beta-alanine, 2,3-diaminopropionic acid and SNAP-5114. Its function is as follows. Mediates sodium- and chloride-dependent transport of gamma-aminobutyric acid (GABA). Mediates transport of beta-alanine. Can also mediate transport of taurine and hypotaurine. The polypeptide is Sodium- and chloride-dependent GABA transporter 2 (SLC6A13) (Homo sapiens (Human)).